A 173-amino-acid polypeptide reads, in one-letter code: Photosystem I assembly protein Ycf3 (173 aa).

TPR repeat units lie at residues 35 to 68, 72 to 105, and 120 to 153; these read AYLY…EDNQ, GETL…NPKQ, and GRMA…YPGG.

Belongs to the Ycf3 family.

It localises to the cellular thylakoid membrane. Its function is as follows. Essential for the assembly of the photosystem I (PSI) complex. May act as a chaperone-like factor to guide the assembly of the PSI subunits. The polypeptide is Photosystem I assembly protein Ycf3 (Prochlorococcus marinus (strain NATL1A)).